Here is a 355-residue protein sequence, read N- to C-terminus: Glycerol-1-phosphate dehydrogenase [NAD(P)+] (355 aa).

Residues 101–105 and 123–126 each bind NAD(+); these read GKSID and TAAS. Asp128 is a binding site for substrate. An NAD(+)-binding site is contributed by Ser132. Asp175 contacts substrate. Zn(2+) contacts are provided by Asp175 and His255. His259 contacts substrate. His271 is a Zn(2+) binding site.

Belongs to the glycerol-1-phosphate dehydrogenase family. In terms of assembly, homodimer. The cofactor is Zn(2+).

Its subcellular location is the cytoplasm. The catalysed reaction is sn-glycerol 1-phosphate + NAD(+) = dihydroxyacetone phosphate + NADH + H(+). It catalyses the reaction sn-glycerol 1-phosphate + NADP(+) = dihydroxyacetone phosphate + NADPH + H(+). It functions in the pathway membrane lipid metabolism; glycerophospholipid metabolism. In terms of biological role, catalyzes the NAD(P)H-dependent reduction of dihydroxyacetonephosphate (DHAP or glycerone phosphate) to glycerol 1-phosphate (G1P). The G1P thus generated is used as the glycerophosphate backbone of phospholipids in the cellular membranes of Archaea. The polypeptide is Glycerol-1-phosphate dehydrogenase [NAD(P)+] (Staphylothermus marinus (strain ATCC 43588 / DSM 3639 / JCM 9404 / F1)).